The primary structure comprises 124 residues: Late embryogenesis abundant protein 37 (124 aa).

A mitochondrion-targeting transit peptide spans 1 to 35 (MSQSLFNLKSLSRSINNTIRMRRYIVITKASQRAY).

The protein belongs to the LEA type 3 family.

It is found in the mitochondrion. In Arabidopsis thaliana (Mouse-ear cress), this protein is Late embryogenesis abundant protein 37.